The following is a 316-amino-acid chain: Ribosomal protein L11 methyltransferase (316 aa).

4 residues coordinate S-adenosyl-L-methionine: Thr-157, Gly-178, Asp-200, and Asn-243.

This sequence belongs to the methyltransferase superfamily. PrmA family.

It is found in the cytoplasm. It carries out the reaction L-lysyl-[protein] + 3 S-adenosyl-L-methionine = N(6),N(6),N(6)-trimethyl-L-lysyl-[protein] + 3 S-adenosyl-L-homocysteine + 3 H(+). Methylates ribosomal protein L11. In Streptococcus pneumoniae (strain JJA), this protein is Ribosomal protein L11 methyltransferase.